We begin with the raw amino-acid sequence, 87 residues long: UPF0248 protein TON_0940 (87 aa).

The protein belongs to the UPF0248 family.

This is UPF0248 protein TON_0940 from Thermococcus onnurineus (strain NA1).